The primary structure comprises 353 residues: T-complex protein 1 subunit eta (353 aa).

Belongs to the TCP-1 chaperonin family. Heterooligomeric complex of about 850 to 900 kDa that forms two stacked rings, 12 to 16 nm in diameter.

It is found in the cytoplasm. Molecular chaperone; assists the folding of proteins upon ATP hydrolysis. Known to play a role, in vitro, in the folding of actin and tubulin. The chain is T-complex protein 1 subunit eta from Tetrahymena thermophila.